The chain runs to 292 residues: E3 ubiquitin-protein ligase RNF144A (292 aa).

The interval 16–236 is TRIAD supradomain; that stretch reads PLVSCKLCLG…YDKGPCRNKL (221 aa). Residues cysteine 20, cysteine 23, cysteine 43, cysteine 46, cysteine 111, cysteine 116, cysteine 135, cysteine 138, cysteine 143, cysteine 146, histidine 151, cysteine 156, cysteine 185, and cysteine 188 each coordinate Zn(2+). The RING-type 1 zinc finger occupies 20–70; sequence CKLCLGEYPVEQMTTIAQCQCIFCTLCLKQYVELLIKEGLETAISCPDAAC. An IBR-type zinc finger spans residues 91-156; that stretch reads QRYKKLQFER…KASWHPGQGC (66 aa). An RING-type 2; atypical zinc finger spans residues 185–214; the sequence is CPKCKVYIERDEGCAQMMCKNCKHAFCWYC. Cysteine 198 is a catalytic residue. Residues cysteine 203, cysteine 206, cysteine 211, cysteine 214, histidine 226, and cysteine 232 each coordinate Zn(2+). The helical transmembrane segment at 250 to 270 threads the bilayer; that stretch reads VVGIFAGFGLLLLVASPFLLL.

This sequence belongs to the RBR family. RNF144 subfamily. Self-associates. Interacts with UBE2L3. In terms of processing, auto-ubiquitinated.

The protein localises to the cell membrane. The protein resides in the cytoplasmic vesicle membrane. It localises to the endosome membrane. It is found in the endoplasmic reticulum membrane. The catalysed reaction is [E2 ubiquitin-conjugating enzyme]-S-ubiquitinyl-L-cysteine + [acceptor protein]-L-lysine = [E2 ubiquitin-conjugating enzyme]-L-cysteine + [acceptor protein]-N(6)-ubiquitinyl-L-lysine.. It functions in the pathway protein modification; protein ubiquitination. Functionally, E3 ubiquitin-protein ligase which accepts ubiquitin from E2 ubiquitin-conjugating enzymes UBE2L3 and UBE2L6 in the form of a thioester and then directly transfers the ubiquitin to targeted substrates. Mediates the ubiquitination and degradation of the DNA damage kinase PRKDC during DNA damage. Positively regulates DNA virus or exogenous cytosolic DNA-triggered innate immune response by mediating STING1 ubiquitination and increasing its 'Lys-6'-linked ubiquitination and translocation from the endoplasmic reticulum to the Golgi leading to downstream signaling pathways. Plays a positive role in EGF-dependent cell proliferation by prolonging EGF/EGFR signaling during EGF stimulation through EGFR ubiquitination. Increases ERK activity independently of EGFR signaling by promoting polyubiquitination and subsequent degradation of VRK3 in the cytosol. The sequence is that of E3 ubiquitin-protein ligase RNF144A (RNF144A) from Homo sapiens (Human).